The chain runs to 1463 residues: MSSAVGPRGPRPPTVPPPMQELPDLSHLTEEERNIIMAVMDRQKEEEEKEEAMLKCVVRDMAKPAACKTPRNAESQPHQPPLNIFRCVCVPRKPSSEEGGPDRNWRLHQQFESYKEQVRKIGEEARRYQGEHKDDAPTCGICHKTKFADGCGHLCSYCRTKFCARCGGRVSLRSNNEDKVVMWVCNLCRKQQEILTKSGAWFFGSGPQQPSQDGTLSDTATGAGSEVPREKKARLQERSRSQTPLSTAAVSSQDTASHGAPLDRNKGAEPSQQALGPEQKQASRSRSEPPRERKKAPGLSEQNGKGGQKSERKRVPKSVVQPGEGTADERERKERRETRRLEKGRSQDYPDRLEKREDGRVAEDEKQRKEEEGVSTPEYTSCEDVELESESVSEKGDLDYWLDPATWHSRETSPISSHPVTWQPSKEGDRLIGRVILNKRTTMPKESGALLGLKVVGGKMTDLGRLGAFITKVKKGSLADVVGHLRAGDEVLEWNGKPLPGATNEEVYNIILESKSEPQVEIIVSRPIGDIPRIPESSHPPLESSSSSFESQKMERPSISVISPTSPGALKDAPQVLPGQLSVKLWYDKVGHQLIVNVLQATDLPPRVDGRPRNPYVKMYFLPDRSDKSKRRTKTVKKLLEPKWNQTFVYSHVHRRDFRERMLEITVWDQPRVQDEESEFLGEILIELETALLDDEPHWYKLQTHDESSLPLPQPSPFMPRRHIHGESSSKKLQRSQRISDSDISDYEVDDGIGVVPPVGYRASARESKATTLTVPEQQRTTHHRSRSVSPHRGDDQGRPRSRLPNVPLQRSLDEIHPTRRSRSPTRHHDASRSLADHRSRHAESQYSSEPDSELLMLPRAKRGRSAECLHMTSELQPSLDRARSASTNCLRPDTSLHSPERERGRWSPSLARRRPASPRIQIQHASPENDRHSRKSERSSIQKQSRKGTASDADRVLPPCLSRRGYAIPRATDQPVIRGKHTTRSRSSEHSSIRTLCSMHHLAPGGSAPPSPLLTRTHRQGSPTQSPPADTSFGSRRGRQLPQVPVRSGSIEQASLVVEERTRQMKMKVHRFKQTTGSGSSQELDHEQYSKYNIHKDQYRSCDNASAKSSDSDVSDVSAISRASSTSRLSSTSFMSEQSERPRGRISSFTPKMQGRRMGTSGRAIIKSTSVSGEIYTLEHNDGSQSDTAVGTVGAGGKKRRSSLSAKVVAIVSRRSRSTSQLSQTESGHKKLKSTIQRSTETGMAAEMRKMVRQPSRESTDGSINSYSSEGNLIFPGVRVGPDSQFSDFLDGLGPAQLVGRQTLATPAMGDIQIGMEDKKGQLEVEVIRARSLTQKPGSKSTPAPYVKVYLLENGACIAKKKTRIARKTLDPLYQQSLVFDESPQGKVLQVIVWGDYGRMDHKCFMGVAQILLEELDLSSMVIGWYKLFPPSSLVDPTLTPLTRRASQSSLESSSGPPCIRS.

Positions 1–26 (MSSAVGPRGPRPPTVPPPMQELPDLS) are disordered. The segment covering 9-20 (GPRPPTVPPPMQ) has biased composition (pro residues). In terms of domain architecture, RabBD spans 22–205 (LPDLSHLTEE…TKSGAWFFGS (184 aa)). Residues 133–193 (KDDAPTCGIC…VCNLCRKQQE (61 aa)) form an FYVE-type zinc finger. The Zn(2+) site is built by Cys139, Cys142, Cys155, Cys158, Cys163, Cys166, Cys185, and Cys188. The segment at 205–393 (SGPQQPSQDG…DVELESESVS (189 aa)) is disordered. Residues 206–222 (GPQQPSQDGTLSDTATG) are compositionally biased toward polar residues. A compositionally biased stretch (basic and acidic residues) spans 227–240 (VPREKKARLQERSR). Residues 241 to 256 (SQTPLSTAAVSSQDTA) are compositionally biased toward polar residues. A compositionally biased stretch (basic and acidic residues) spans 327–372 (ADERERKERRETRRLEKGRSQDYPDRLEKREDGRVAEDEKQRKEEE). Acidic residues predominate over residues 381–391 (SCEDVELESES). A Phosphoserine modification is found at Ser413. The 87-residue stretch at 440–526 (RTTMPKESGA…EPQVEIIVSR (87 aa)) folds into the PDZ domain. The tract at residues 533 to 567 (RIPESSHPPLESSSSSFESQKMERPSISVISPTSP) is disordered. Residues 535–551 (PESSHPPLESSSSSFES) are compositionally biased toward low complexity. Phosphoserine occurs at positions 563 and 566. The C2 1 domain maps to 577–700 (LPGQLSVKLW…ALLDDEPHWY (124 aa)). The segment at 705–856 (HDESSLPLPQ…YSSEPDSELL (152 aa)) is disordered. Residue Ser716 is modified to Phosphoserine. Polar residues predominate over residues 770 to 779 (ATTLTVPEQQ). Ser812 carries the phosphoserine modification. The segment covering 827-844 (RHHDASRSLADHRSRHAE) has biased composition (basic and acidic residues). Ser866 is subject to Phosphoserine. Residues 874 to 1049 (SELQPSLDRA…RQLPQVPVRS (176 aa)) are disordered. Residues 928–941 (PENDRHSRKSERSS) are compositionally biased toward basic and acidic residues. Polar residues predominate over residues 1021–1035 (QGSPTQSPPADTSFG). Position 1023 is a phosphoserine (Ser1023). The residue at position 1025 (Thr1025) is a Phosphothreonine. 7 positions are modified to phosphoserine: Ser1027, Ser1079, Ser1081, Ser1082, Ser1110, Ser1111, and Ser1113. The interval 1104-1161 (DNASAKSSDSDVSDVSAISRASSTSRLSSTSFMSEQSERPRGRISSFTPKMQGRRMGT) is disordered. Residues 1116-1137 (SDVSAISRASSTSRLSSTSFMS) show a composition bias toward low complexity. Ser1187 carries the phosphoserine modification. The segment at 1216–1266 (RSRSTSQLSQTESGHKKLKSTIQRSTETGMAAEMRKMVRQPSRESTDGSIN) is disordered. Over residues 1248–1261 (EMRKMVRQPSREST) the composition is skewed to basic and acidic residues. Residues 1309 to 1427 (AMGDIQIGME…DLSSMVIGWY (119 aa)) form the C2 2 domain. Phosphoserine occurs at positions 1448, 1451, 1454, and 1463.

As to quaternary structure, binds SNAP25, SYT1 and CACNA1B. Interaction with SYT1 is enhanced by calcium ions. Interaction with SNAP25 is weaker in the presence of calcium ions. Interacts with TSPOAP1 and RIMBP2; interacts with PPFIA3 and PPFIA4. Interacts with ERC1. Interacts with RAB3A, RAB3B and RAB3D that have been activated by GTP-binding. Interacts with RAB3C, RAB10, RAB26 and RAB37. Binds UNC13A. Phosphorylated by BRSK1.

The protein resides in the cell membrane. It localises to the synapse. It is found in the presynaptic cell membrane. Functionally, rab effector involved in exocytosis. May act as scaffold protein that regulates neurotransmitter release at the active zone. Essential for maintaining normal probability of neurotransmitter release and for regulating release during short-term synaptic plasticity. Plays a role in dendrite formation by melanocytes. This Mus musculus (Mouse) protein is Regulating synaptic membrane exocytosis protein 1 (Rims1).